The chain runs to 500 residues: Pyridine nucleotide-disulfide oxidoreductase domain-containing protein 1 (500 aa).

Position 1 is an N-acetylmethionine (Met-1). A disordered region spans residues 211–235 (TRYTTEGRKKEARSKSKADNVGSAL). Positions 213–228 (YTTEGRKKEARSKSKA) are enriched in basic and acidic residues.

The protein belongs to the class-I pyridine nucleotide-disulfide oxidoreductase family. PYROXD1 subfamily. Requires FAD as cofactor.

Its subcellular location is the nucleus. The protein localises to the cytoplasm. It localises to the myofibril. The protein resides in the sarcomere. Functionally, probable FAD-dependent oxidoreductase; involved in the cellular oxidative stress response. Required for normal sarcomere structure and muscle fiber integrity. This is Pyridine nucleotide-disulfide oxidoreductase domain-containing protein 1 (PYROXD1) from Homo sapiens (Human).